The sequence spans 485 residues: Glutamyl-tRNA(Gln) amidotransferase subunit A (485 aa).

Active-site charge relay system residues include K75 and S150. S174 functions as the Acyl-ester intermediate in the catalytic mechanism.

It belongs to the amidase family. GatA subfamily. As to quaternary structure, heterotrimer of A, B and C subunits.

It catalyses the reaction L-glutamyl-tRNA(Gln) + L-glutamine + ATP + H2O = L-glutaminyl-tRNA(Gln) + L-glutamate + ADP + phosphate + H(+). Allows the formation of correctly charged Gln-tRNA(Gln) through the transamidation of misacylated Glu-tRNA(Gln) in organisms which lack glutaminyl-tRNA synthetase. The reaction takes place in the presence of glutamine and ATP through an activated gamma-phospho-Glu-tRNA(Gln). This Trichodesmium erythraeum (strain IMS101) protein is Glutamyl-tRNA(Gln) amidotransferase subunit A.